A 509-amino-acid polypeptide reads, in one-letter code: Lysine--tRNA ligase (509 aa).

Positions 418 and 425 each coordinate Mg(2+).

It belongs to the class-II aminoacyl-tRNA synthetase family. As to quaternary structure, homodimer. Mg(2+) serves as cofactor.

The protein resides in the cytoplasm. It carries out the reaction tRNA(Lys) + L-lysine + ATP = L-lysyl-tRNA(Lys) + AMP + diphosphate. The polypeptide is Lysine--tRNA ligase (Acinetobacter baumannii (strain AB307-0294)).